We begin with the raw amino-acid sequence, 152 residues long: UPF0266 membrane protein YobD (152 aa).

The next 3 helical transmembrane spans lie at 6-26 (LVLI…QFIM), 45-65 (VDSV…VTSH), and 67-87 (AQMT…IFWI).

The protein belongs to the UPF0266 family.

It is found in the cell inner membrane. The polypeptide is UPF0266 membrane protein YobD (Salmonella enteritidis PT4 (strain P125109)).